The primary structure comprises 209 residues: Orotate phosphoribosyltransferase (209 aa).

5-phospho-alpha-D-ribose 1-diphosphate contacts are provided by residues Arg96, Lys100, His102, and 122–130 (EDLISTGGS). Residue Ser126 participates in orotate binding.

Belongs to the purine/pyrimidine phosphoribosyltransferase family. PyrE subfamily. As to quaternary structure, homodimer. Mg(2+) serves as cofactor.

The enzyme catalyses orotidine 5'-phosphate + diphosphate = orotate + 5-phospho-alpha-D-ribose 1-diphosphate. It functions in the pathway pyrimidine metabolism; UMP biosynthesis via de novo pathway; UMP from orotate: step 1/2. Catalyzes the transfer of a ribosyl phosphate group from 5-phosphoribose 1-diphosphate to orotate, leading to the formation of orotidine monophosphate (OMP). The chain is Orotate phosphoribosyltransferase from Streptococcus pyogenes serotype M3 (strain ATCC BAA-595 / MGAS315).